The following is a 356-amino-acid chain: Protein-glutamate methylesterase/protein-glutamine glutaminase 2 (356 aa).

In terms of domain architecture, Response regulatory spans 6-123 (KVLIVDDSAL…KQFLEESSIR (118 aa)). Residue Asp-57 is modified to 4-aspartylphosphate. The region spanning 165–356 (VQRTEKVVVV…AAAIVKACNS (192 aa)) is the CheB-type methylesterase domain. Residues Ser-177, His-203, and Asp-299 contribute to the active site.

The protein belongs to the CheB family. In terms of processing, phosphorylated by CheA. Phosphorylation of the N-terminal regulatory domain activates the methylesterase activity.

Its subcellular location is the cytoplasm. It carries out the reaction [protein]-L-glutamate 5-O-methyl ester + H2O = L-glutamyl-[protein] + methanol + H(+). The catalysed reaction is L-glutaminyl-[protein] + H2O = L-glutamyl-[protein] + NH4(+). In terms of biological role, involved in chemotaxis. Part of a chemotaxis signal transduction system that modulates chemotaxis in response to various stimuli. Catalyzes the demethylation of specific methylglutamate residues introduced into the chemoreceptors (methyl-accepting chemotaxis proteins or MCP) by CheR. Also mediates the irreversible deamidation of specific glutamine residues to glutamic acid. This chain is Protein-glutamate methylesterase/protein-glutamine glutaminase 2, found in Oleidesulfovibrio alaskensis (strain ATCC BAA-1058 / DSM 17464 / G20) (Desulfovibrio alaskensis).